The sequence spans 287 residues: 2-dehydro-3-deoxyphosphooctonate aldolase (287 aa).

Belongs to the KdsA family.

It is found in the cytoplasm. The catalysed reaction is D-arabinose 5-phosphate + phosphoenolpyruvate + H2O = 3-deoxy-alpha-D-manno-2-octulosonate-8-phosphate + phosphate. Its pathway is carbohydrate biosynthesis; 3-deoxy-D-manno-octulosonate biosynthesis; 3-deoxy-D-manno-octulosonate from D-ribulose 5-phosphate: step 2/3. It participates in bacterial outer membrane biogenesis; lipopolysaccharide biosynthesis. This chain is 2-dehydro-3-deoxyphosphooctonate aldolase, found in Bradyrhizobium sp. (strain ORS 278).